We begin with the raw amino-acid sequence, 222 residues long: Large ribosomal subunit protein bL25 (222 aa).

Belongs to the bacterial ribosomal protein bL25 family. CTC subfamily. As to quaternary structure, part of the 50S ribosomal subunit; part of the 5S rRNA/L5/L18/L25 subcomplex. Contacts the 5S rRNA. Binds to the 5S rRNA independently of L5 and L18.

This is one of the proteins that binds to the 5S RNA in the ribosome where it forms part of the central protuberance. In Ruthia magnifica subsp. Calyptogena magnifica, this protein is Large ribosomal subunit protein bL25.